We begin with the raw amino-acid sequence, 495 residues long: ATP synthase subunit beta, chloroplastic (495 aa).

172–179 (GGAGVGKT) contributes to the ATP binding site.

Belongs to the ATPase alpha/beta chains family. In terms of assembly, F-type ATPases have 2 components, CF(1) - the catalytic core - and CF(0) - the membrane proton channel. CF(1) has five subunits: alpha(3), beta(3), gamma(1), delta(1), epsilon(1). CF(0) has four main subunits: a(1), b(1), b'(1) and c(9-12).

Its subcellular location is the plastid. It is found in the chloroplast thylakoid membrane. The catalysed reaction is ATP + H2O + 4 H(+)(in) = ADP + phosphate + 5 H(+)(out). Produces ATP from ADP in the presence of a proton gradient across the membrane. The catalytic sites are hosted primarily by the beta subunits. This Scilla siberica (Siberian squill) protein is ATP synthase subunit beta, chloroplastic.